The primary structure comprises 596 residues: Structural protein precursor VP8 (596 aa).

The protein resides in the virion. Functionally, 120 subunits of the putative clamp protein VP8b appear to stabilize the capsid shell. The polypeptide is Structural protein precursor VP8 (Oryza latifolia (Indian wild rice)).